The sequence spans 126 residues: Scygonadin (126 aa).

The first 24 residues, 1–24, serve as a signal peptide directing secretion; the sequence is MRSSLLLGLTVVVLLGVIVPPCMA.

Expressed in the ejaculatory ducts of mature males. Not detected in the ejaculatory ducts of immature males. Not detected in hepatopancreas, female reproductive tract, eyes, exoskeleton, subcuticular epithelia, heart, gills, stomach, muscle and hemocytes.

It localises to the secreted. Functionally, has antibacterial activity against the Gram-positive bacterium M.luteus with an IC(90) of 125ug/ml. Has weak antibacterial activity against the Gram-negative bacterium A.hydrophila. This chain is Scygonadin, found in Scylla serrata (Mud crab).